The chain runs to 375 residues: Serpin B5 (375 aa).

5 N-linked (GlcNAc...) asparagine glycosylation sites follow: N99, N133, N155, N188, and N361.

This sequence belongs to the serpin family. Ov-serpin subfamily. Interacts with IRF6.

It localises to the secreted. The protein resides in the extracellular space. In terms of biological role, tumor suppressor. It blocks the growth, invasion, and metastatic properties of mammary tumors. As it does not undergo the S (stressed) to R (relaxed) conformational transition characteristic of active serpins, it exhibits no serine protease inhibitory activity. The sequence is that of Serpin B5 (SERPINB5) from Plecturocebus moloch (Dusky titi monkey).